We begin with the raw amino-acid sequence, 327 residues long: Malate dehydrogenase (327 aa).

NAD(+) is bound at residue glycine 12–alanine 18. Positions 93 and 99 each coordinate substrate. Residues asparagine 106, glutamine 113, and valine 130–asparagine 132 each bind NAD(+). Asparagine 132 and arginine 163 together coordinate substrate. Histidine 188 acts as the Proton acceptor in catalysis.

Belongs to the LDH/MDH superfamily. MDH type 2 family.

The enzyme catalyses (S)-malate + NAD(+) = oxaloacetate + NADH + H(+). Functionally, catalyzes the reversible oxidation of malate to oxaloacetate. In Paraburkholderia phytofirmans (strain DSM 17436 / LMG 22146 / PsJN) (Burkholderia phytofirmans), this protein is Malate dehydrogenase.